Consider the following 432-residue polypeptide: Anaerobic glycerol-3-phosphate dehydrogenase subunit B (432 aa).

This sequence belongs to the anaerobic G-3-P dehydrogenase subunit B family. Composed of a catalytic GlpA/B dimer and of membrane bound GlpC. FMN serves as cofactor.

The enzyme catalyses a quinone + sn-glycerol 3-phosphate = dihydroxyacetone phosphate + a quinol. Its pathway is polyol metabolism; glycerol degradation via glycerol kinase pathway; glycerone phosphate from sn-glycerol 3-phosphate (anaerobic route): step 1/1. Conversion of glycerol 3-phosphate to dihydroxyacetone. Uses fumarate or nitrate as electron acceptor. The chain is Anaerobic glycerol-3-phosphate dehydrogenase subunit B from Haemophilus influenzae (strain PittEE).